We begin with the raw amino-acid sequence, 53 residues long: uncharacterized protein (53 aa).

Residues 24-44 form a helical membrane-spanning segment; that stretch reads LMTFIAVNAVLSLILIRAVIL.

It localises to the membrane. This is an uncharacterized protein from Methanocaldococcus jannaschii (strain ATCC 43067 / DSM 2661 / JAL-1 / JCM 10045 / NBRC 100440) (Methanococcus jannaschii).